Here is a 366-residue protein sequence, read N- to C-terminus: Chorismate synthase (366 aa).

An NADP(+)-binding site is contributed by Arg48. Residues 125–127 (RSS), Gly283, 298–302 (KPTPS), and Arg324 each bind FMN.

Belongs to the chorismate synthase family. Homotetramer. Requires FMNH2 as cofactor.

It carries out the reaction 5-O-(1-carboxyvinyl)-3-phosphoshikimate = chorismate + phosphate. Its pathway is metabolic intermediate biosynthesis; chorismate biosynthesis; chorismate from D-erythrose 4-phosphate and phosphoenolpyruvate: step 7/7. Functionally, catalyzes the anti-1,4-elimination of the C-3 phosphate and the C-6 proR hydrogen from 5-enolpyruvylshikimate-3-phosphate (EPSP) to yield chorismate, which is the branch point compound that serves as the starting substrate for the three terminal pathways of aromatic amino acid biosynthesis. This reaction introduces a second double bond into the aromatic ring system. The polypeptide is Chorismate synthase (Lachnospira eligens (strain ATCC 27750 / DSM 3376 / VPI C15-48 / C15-B4) (Eubacterium eligens)).